A 530-amino-acid polypeptide reads, in one-letter code: Glucose-6-phosphate isomerase (530 aa).

E347 acts as the Proton donor in catalysis. Catalysis depends on residues H378 and K493.

Belongs to the GPI family.

Its subcellular location is the cytoplasm. The enzyme catalyses alpha-D-glucose 6-phosphate = beta-D-fructose 6-phosphate. The protein operates within carbohydrate biosynthesis; gluconeogenesis. It functions in the pathway carbohydrate degradation; glycolysis; D-glyceraldehyde 3-phosphate and glycerone phosphate from D-glucose: step 2/4. Its function is as follows. Catalyzes the reversible isomerization of glucose-6-phosphate to fructose-6-phosphate. The chain is Glucose-6-phosphate isomerase from Chlamydia abortus (strain DSM 27085 / S26/3) (Chlamydophila abortus).